Consider the following 826-residue polypeptide: Zinc phosphodiesterase ELAC protein 2 (826 aa).

The transit peptide at 1 to 16 (MWALCSLLRSAAGRTM) directs the protein to the mitochondrion. Disordered regions lie at residues 16–51 (MSQG…PSGC) and 188–231 (EQRR…VSQR). Positions 27–38 (ARRERPRKDPLR) are enriched in basic and acidic residues. Phosphoserine occurs at positions 199, 208, 212, 229, 618, and 736. Residues 208 to 224 (SPERSSDSESNENEPHL) show a composition bias toward basic and acidic residues. The interval 798 to 826 (ELAGGLEDGEPQQKRAHTEEPQAKKVRAQ) is disordered. The segment covering 808–820 (PQQKRAHTEEPQA) has biased composition (basic and acidic residues).

Belongs to the RNase Z family. As to quaternary structure, homodimer. Interacts with PTCD1. The cofactor is Zn(2+).

The protein resides in the mitochondrion. It localises to the mitochondrion matrix. The protein localises to the mitochondrion nucleoid. Its subcellular location is the nucleus. The catalysed reaction is Endonucleolytic cleavage of RNA, removing extra 3' nucleotides from tRNA precursor, generating 3' termini of tRNAs. A 3'-hydroxy group is left at the tRNA terminus and a 5'-phosphoryl group is left at the trailer molecule.. Zinc phosphodiesterase, which displays mitochondrial tRNA 3'-processing endonuclease activity. Involved in tRNA maturation, by removing a 3'-trailer from precursor tRNA. Associates with mitochondrial DNA complexes at the nucleoids to initiate RNA processing and ribosome assembly. In Pan troglodytes (Chimpanzee), this protein is Zinc phosphodiesterase ELAC protein 2 (ELAC2).